The primary structure comprises 385 residues: Aryl-alcohol dehydrogenase [NADP(+)] (385 aa).

The active-site Proton donor is the tyrosine 76. 238 to 248 (NVLCAGKIRTD) serves as a coordination point for NADP(+).

The protein belongs to the aldo/keto reductase family. Aldo/keto reductase 2 subfamily. The N-terminus is blocked.

The enzyme catalyses an aromatic primary alcohol + NADP(+) = an aromatic aldehyde + NADPH + H(+). This chain is Aryl-alcohol dehydrogenase [NADP(+)], found in Phanerodontia chrysosporium (White-rot fungus).